We begin with the raw amino-acid sequence, 404 residues long: Serine/threonine transporter SstT (404 aa).

9 helical membrane passes run 11-31 (IINA…IILA), 44-64 (LGGL…FVLV), 82-102 (IISL…TMSF), 144-164 (TANY…LHHA), 179-199 (VSFI…GLVA), 218-238 (GVLL…MVFI), 290-310 (IPLG…VLTL), 316-336 (MGIQ…AISA), and 363-383 (VAMQ…SAET).

Belongs to the dicarboxylate/amino acid:cation symporter (DAACS) (TC 2.A.23) family.

It localises to the cell inner membrane. It carries out the reaction L-serine(in) + Na(+)(in) = L-serine(out) + Na(+)(out). The catalysed reaction is L-threonine(in) + Na(+)(in) = L-threonine(out) + Na(+)(out). Functionally, involved in the import of serine and threonine into the cell, with the concomitant import of sodium (symport system). This Desulfotalea psychrophila (strain LSv54 / DSM 12343) protein is Serine/threonine transporter SstT.